A 430-amino-acid chain; its full sequence is Tyrosine--tRNA ligase (430 aa).

Residue Y32 participates in L-tyrosine binding. Residues 37–46 (PTADSLHIGH) carry the 'HIGH' region motif. Positions 172 and 176 each coordinate L-tyrosine. Positions 232 to 236 (KFGKT) match the 'KMSKS' region motif. K235 serves as a coordination point for ATP. The S4 RNA-binding domain occupies 362–430 (ISLVDLLADA…KKSYYLIIVE (69 aa)).

The protein belongs to the class-I aminoacyl-tRNA synthetase family. TyrS type 1 subfamily. Homodimer.

The protein localises to the cytoplasm. The catalysed reaction is tRNA(Tyr) + L-tyrosine + ATP = L-tyrosyl-tRNA(Tyr) + AMP + diphosphate + H(+). Catalyzes the attachment of tyrosine to tRNA(Tyr) in a two-step reaction: tyrosine is first activated by ATP to form Tyr-AMP and then transferred to the acceptor end of tRNA(Tyr). The protein is Tyrosine--tRNA ligase of Porphyromonas gingivalis (strain ATCC 33277 / DSM 20709 / CIP 103683 / JCM 12257 / NCTC 11834 / 2561).